A 284-amino-acid polypeptide reads, in one-letter code: Nucleotide-binding protein Sden_0486 (284 aa).

Gly8 to Ser15 lines the ATP pocket. Asp56–Asn59 contributes to the GTP binding site.

This sequence belongs to the RapZ-like family.

In terms of biological role, displays ATPase and GTPase activities. This chain is Nucleotide-binding protein Sden_0486, found in Shewanella denitrificans (strain OS217 / ATCC BAA-1090 / DSM 15013).